We begin with the raw amino-acid sequence, 206 residues long: Protein phosphatase inhibitor 2 (206 aa).

The segment at 1-36 (MAASTASHRPIKGILKNKTSAASPPVVPSAEQPRPI) is disordered. At A2 the chain carries N-acetylalanine. The segment at 12–17 (KGILKN) is required for binding PPP1CC. The tract at residues 44–56 (KSQKWDEMNILAT) is required for binding the 'RVXF' binding groove of PPP1CC. Residue S45 is modified to Phosphoserine; by ATM. T74 bears the Phosphothreonine mark. The segment at 75–143 (PYHNMIGDDE…EREKKRQFEM (69 aa)) is disordered. Positions 81–92 (GDDEDAYSDSEG) are enriched in acidic residues. Phosphoserine is present on residues S88 and S90. Residues T97 and T117 each carry the phosphothreonine modification. Positions 111–121 (SEPKYRTREQE) are enriched in basic and acidic residues. Residues S122, S123, and S131 each carry the phosphoserine modification. The span at 122 to 131 (SSGEEDNDLS) shows a compositional bias: acidic residues. The segment covering 132–143 (PEEREKKRQFEM) has biased composition (basic and acidic residues). The required for binding PPP1CC catalytic center, displacing metal ions and inhibition of PPP1CC catalytic activity stretch occupies residues 148-151 (HYNE). Residues 164-206 (KDLHDDDEDEEMAETADGDSMNVEESSQGSTTSDHLQHKSQSS) form a disordered region. A compositionally biased stretch (acidic residues) spans 168 to 180 (DDDEDEEMAETAD). The segment covering 186–206 (VEESSQGSTTSDHLQHKSQSS) has biased composition (polar residues).

This sequence belongs to the protein phosphatase inhibitor 2 family. Heterodimer with PP1. Post-translationally, phosphorylation on Ser-45 by ATM activates PP1 by dissociating the PP1-PPP1R2 complex. Phosphorylation on Thr-74 by GSK3 activates PP1 by dissociating the PP1-PPP1R2 complex.

In terms of biological role, inhibitor of protein-phosphatase 1. This Mus musculus (Mouse) protein is Protein phosphatase inhibitor 2 (Ppp1r2).